The primary structure comprises 161 residues: Nucleotide-binding protein Pfl01_4421 (161 aa).

This sequence belongs to the YajQ family.

Its function is as follows. Nucleotide-binding protein. In Pseudomonas fluorescens (strain Pf0-1), this protein is Nucleotide-binding protein Pfl01_4421.